Consider the following 204-residue polypeptide: Lymphotoxin-alpha (204 aa).

Residues 1 to 33 form the signal peptide; the sequence is MTPPGRLYLLRVCSTPPLLLLGLLLALPLEAQG. The THD domain maps to 62–204; it reads PAAHLVGDPS…SSVFFGAFAL (143 aa). N95 carries N-linked (GlcNAc...) asparagine glycosylation. C119 and C155 are disulfide-bonded.

This sequence belongs to the tumor necrosis factor family. As to quaternary structure, homotrimer, and heterotrimer of either two LTB and one LTA subunits or (less prevalent) two LTA and one LTB subunits. Interacts with TNFRSF14.

The protein resides in the secreted. It localises to the membrane. Cytokine that in its homotrimeric form binds to TNFRSF1A/TNFR1, TNFRSF1B/TNFBR and TNFRSF14/HVEM. In its heterotrimeric form with LTB binds to TNFRSF3/LTBR. Lymphotoxin is produced by lymphocytes and is cytotoxic for a wide range of tumor cells in vitro and in vivo. The protein is Lymphotoxin-alpha (LTA) of Bos taurus (Bovine).